A 222-amino-acid polypeptide reads, in one-letter code: MPQQGLAYPVPTLIYHITHLNNLQGILQRGGLLPYSQRPPTQQNVAYGHIQAHRAQVVVPVGPRGKLHDYVPFYFCPRSPMLYAIHTQQTDYQGDQRPILHLVSSAQKVAEARIPFVFTDRHAAVQYVCFFHKLEHLKALDWQAIQASYWANVREKKQAEFLVKDFFPWELVEEIGVIDKTIQAQVESILAQFPDLHHPPVRVRRSWYYKKRLCSASCEATF.

The DarT domain occupies 12–209 (TLIYHITHLN…PVRVRRSWYY (198 aa)). NAD(+) is bound by residues 16-18 (HIT), glycine 25, and leucine 33. Positions 38 to 56 (RPPTQQNVAYGHIQAHRAQ) are NAD(+)-binding element. Residues 47–53 (YGHIQAH) mediate DNA binding. Arginine 54 lines the NAD(+) pocket. The active-site Proton acceptor is arginine 54. DNA-binding regions lie at residues 78–83 (RSPMLY), 148–151 (SYWA), and 154–158 (REKKQ). The ADP-ribosylating turn-turn loop stretch occupies residues 119–160 (TDRHAAVQYVCFFHKLEHLKALDWQAIQASYWANVREKKQAE). Residue glutamate 160 is part of the active site.

It belongs to the DarT ADP-ribosyltransferase family. Interacts with cognate antitoxin DarG (via C-terminus); this heterodimeric complex neutralizes the toxic effect of DarT by preventing ssDNA binding to DarT and consequently inactivating the toxin by direct protein-protein interactions.

The enzyme catalyses a thymidine in DNA + NAD(+) = an N-(ADP-alpha-D-ribosyl)-thymidine in DNA + nicotinamide + H(+). In terms of biological role, toxic component of the hybrid type II/IV toxin-antitoxin (TA) system DarTG, which plays a crucial role in controlling bacterial growth and bacteriophage infection. Its toxic effect is neutralized by cognate antitoxin DarG. In case of phage infection, DarT toxin ADP-ribosylates DNA, which inhibits both viral DNA and RNA synthesis and leads to abortive infection. ADP-ribosylates ssDNA on the second thymidine of the consensus sequence 5'-TNTC-3'; the protein does not auto-modify. Has no activity on dsDNA in vitro. This leads to a decrease in DNA replication. Upon expression in E.coli inhibits cell growth, colony formation and induces the SOS response. Expression leads to bacteriostasis; however if cells grow over an hour in the presence of toxin, growth is no longer restored on antitoxin-inducing plates. In E.coli ADP-ribosylates genomic DNA (gDNA), which induces RecA expression (a marker for DNA damage). This Thermus aquaticus (strain ATCC BAA-2747 / Y51MC23) protein is DNA ADP-ribosyl transferase.